We begin with the raw amino-acid sequence, 296 residues long: Bifunctional protein FolD (296 aa).

NADP(+)-binding positions include 166–168 (GRS), serine 191, and isoleucine 232.

The protein belongs to the tetrahydrofolate dehydrogenase/cyclohydrolase family. As to quaternary structure, homodimer.

It catalyses the reaction (6R)-5,10-methylene-5,6,7,8-tetrahydrofolate + NADP(+) = (6R)-5,10-methenyltetrahydrofolate + NADPH. The catalysed reaction is (6R)-5,10-methenyltetrahydrofolate + H2O = (6R)-10-formyltetrahydrofolate + H(+). Its pathway is one-carbon metabolism; tetrahydrofolate interconversion. Catalyzes the oxidation of 5,10-methylenetetrahydrofolate to 5,10-methenyltetrahydrofolate and then the hydrolysis of 5,10-methenyltetrahydrofolate to 10-formyltetrahydrofolate. The polypeptide is Bifunctional protein FolD (Cereibacter sphaeroides (strain ATCC 17023 / DSM 158 / JCM 6121 / CCUG 31486 / LMG 2827 / NBRC 12203 / NCIMB 8253 / ATH 2.4.1.) (Rhodobacter sphaeroides)).